A 943-amino-acid polypeptide reads, in one-letter code: U3 small nucleolar RNA-associated protein 12 (943 aa).

WD repeat units follow at residues 77–107, 119–149, 161–190, 202–230, 389–418, 428–458, 471–501, 571–601, 613–643, and 655–685; these read AKPAECTYLEAHKDTDLLAVGYADGVIKVWD, GHKAAITLLQFDGTGTRLISGSKDSNIIVWD, SHKDSITGFWCQGEDWLISTSKDGMIKLWD, AHTGECWGLAVKDDLLITTGTDSQVKIWK, GQRTDVRSIDISDDNKLLATASNGSLKIWN, FECGYALTCKFLPGGLLVILGTRNGELQLFD, AHDAAIWSLDLTSDGKRLVTGSADKTVKFWD, GHKLPVLSIDISFDSKMIITSSADKNIKIWG, AHQDSIMNVKFLPQSHNFFSCSKDAVVKYWD, and AHQSEVWALAVATDGGFVVSSSHDHSIRIWE. The disordered stretch occupies residues 715–739; sequence EGNGDDAFKADASGEGVEDEASGVH.

Belongs to the WD repeat WDR3/UTP12 family. In terms of assembly, interacts with snoRNA U3. Interacts with MPP10. Component of the ribosomal small subunit (SSU) processome composed of at least 40 protein subunits and snoRNA U3.

It localises to the nucleus. The protein resides in the nucleolus. Involved in nucleolar processing of pre-18S ribosomal RNA. The polypeptide is U3 small nucleolar RNA-associated protein 12 (DIP2) (Saccharomyces cerevisiae (strain ATCC 204508 / S288c) (Baker's yeast)).